A 271-amino-acid polypeptide reads, in one-letter code: Proteasome inhibitor PI31 subunit (271 aa).

A2 carries the N-acetylalanine modification. The interval 2 to 150 (AGLEVLFASA…PIHEQWEKVR (149 aa)) is important for homodimerization and interaction with FBXO7. 2 positions are modified to phosphoserine: S153 and S189. R205 carries the post-translational modification Omega-N-methylarginine. At R219 the chain carries Asymmetric dimethylarginine. The segment at 221 to 271 (LIDPSSGLPNRLPPGAVPPGARFDPFGPIGTSPSGPNPDHLPPPGYDDMYL) is disordered. An Omega-N-methylarginine modification is found at R231. S252 bears the Phosphoserine mark. The span at 255–265 (GPNPDHLPPPG) shows a compositional bias: pro residues.

Belongs to the proteasome inhibitor PI31 family. Monomer and homodimer. Interacts with FBXO7.

The protein localises to the cytoplasm. Its subcellular location is the endoplasmic reticulum. Plays an important role in control of proteasome function. Inhibits the hydrolysis of protein and peptide substrates by the 20S proteasome. Also inhibits the activation of the proteasome by the proteasome regulatory proteins PA700 and PA28. The sequence is that of Proteasome inhibitor PI31 subunit (Psmf1) from Rattus norvegicus (Rat).